The primary structure comprises 274 residues: Adenosylcobinamide-GDP ribazoletransferase (274 aa).

Transmembrane regions (helical) follow at residues 46 to 66, 69 to 89, 117 to 137, 151 to 173, 192 to 212, 216 to 236, and 253 to 273; these read VMAS…AIAF, TSLG…WELF, IIAD…SILI, WWMV…HSRL, HTII…PLAM, ELIT…LVEI, and FIMH…VGIV.

It belongs to the CobS family. The cofactor is Mg(2+).

The protein resides in the cell membrane. The enzyme catalyses alpha-ribazole + adenosylcob(III)inamide-GDP = adenosylcob(III)alamin + GMP + H(+). The catalysed reaction is alpha-ribazole 5'-phosphate + adenosylcob(III)inamide-GDP = adenosylcob(III)alamin 5'-phosphate + GMP + H(+). The protein operates within cofactor biosynthesis; adenosylcobalamin biosynthesis; adenosylcobalamin from cob(II)yrinate a,c-diamide: step 7/7. In terms of biological role, joins adenosylcobinamide-GDP and alpha-ribazole to generate adenosylcobalamin (Ado-cobalamin). Also synthesizes adenosylcobalamin 5'-phosphate from adenosylcobinamide-GDP and alpha-ribazole 5'-phosphate. The sequence is that of Adenosylcobinamide-GDP ribazoletransferase from Corynebacterium diphtheriae (strain ATCC 700971 / NCTC 13129 / Biotype gravis).